Consider the following 248-residue polypeptide: Biosynthetic peptidoglycan transglycosylase (248 aa).

Residues 17–37 form a helical membrane-spanning segment; sequence LLIFFFASTILAVIVYRFMPV.

Belongs to the glycosyltransferase 51 family.

Its subcellular location is the cell inner membrane. The catalysed reaction is [GlcNAc-(1-&gt;4)-Mur2Ac(oyl-L-Ala-gamma-D-Glu-L-Lys-D-Ala-D-Ala)](n)-di-trans,octa-cis-undecaprenyl diphosphate + beta-D-GlcNAc-(1-&gt;4)-Mur2Ac(oyl-L-Ala-gamma-D-Glu-L-Lys-D-Ala-D-Ala)-di-trans,octa-cis-undecaprenyl diphosphate = [GlcNAc-(1-&gt;4)-Mur2Ac(oyl-L-Ala-gamma-D-Glu-L-Lys-D-Ala-D-Ala)](n+1)-di-trans,octa-cis-undecaprenyl diphosphate + di-trans,octa-cis-undecaprenyl diphosphate + H(+). The protein operates within cell wall biogenesis; peptidoglycan biosynthesis. Functionally, peptidoglycan polymerase that catalyzes glycan chain elongation from lipid-linked precursors. This Bacteroides thetaiotaomicron (strain ATCC 29148 / DSM 2079 / JCM 5827 / CCUG 10774 / NCTC 10582 / VPI-5482 / E50) protein is Biosynthetic peptidoglycan transglycosylase.